A 138-amino-acid chain; its full sequence is Probable lactoylglutathione lyase (138 aa).

In terms of domain architecture, VOC spans 5 to 129 (RILHTMLRVG…DGYMIELIQN (125 aa)). His-8 lines the Ni(2+) pocket. Substrate is bound at residue Arg-12. Position 59 (Glu-59) interacts with Ni(2+). Residues Asn-63 and His-77 each coordinate substrate. Ni(2+) contacts are provided by His-77 and Glu-125. Glu-125 acts as the Proton donor/acceptor in catalysis.

The protein belongs to the glyoxalase I family. It depends on Ni(2+) as a cofactor.

It carries out the reaction (R)-S-lactoylglutathione = methylglyoxal + glutathione. It functions in the pathway secondary metabolite metabolism; methylglyoxal degradation; (R)-lactate from methylglyoxal: step 1/2. Functionally, catalyzes the conversion of hemimercaptal, formed from methylglyoxal and glutathione, to S-lactoylglutathione. In Vibrio parahaemolyticus serotype O3:K6 (strain RIMD 2210633), this protein is Probable lactoylglutathione lyase (gloA).